A 513-amino-acid chain; its full sequence is ATP synthase subunit alpha (513 aa).

169–176 (GDRQTGKT) contributes to the ATP binding site.

Belongs to the ATPase alpha/beta chains family. In terms of assembly, F-type ATPases have 2 components, CF(1) - the catalytic core - and CF(0) - the membrane proton channel. CF(1) has five subunits: alpha(3), beta(3), gamma(1), delta(1), epsilon(1). CF(0) has three main subunits: a(1), b(2) and c(9-12). The alpha and beta chains form an alternating ring which encloses part of the gamma chain. CF(1) is attached to CF(0) by a central stalk formed by the gamma and epsilon chains, while a peripheral stalk is formed by the delta and b chains.

It localises to the cell inner membrane. It catalyses the reaction ATP + H2O + 4 H(+)(in) = ADP + phosphate + 5 H(+)(out). In terms of biological role, produces ATP from ADP in the presence of a proton gradient across the membrane. The alpha chain is a regulatory subunit. In Aliivibrio fischeri (strain ATCC 700601 / ES114) (Vibrio fischeri), this protein is ATP synthase subunit alpha.